The chain runs to 62 residues: uncharacterized protein (62 aa).

This is an uncharacterized protein from Invertebrate iridescent virus 6 (IIV-6).